Reading from the N-terminus, the 1594-residue chain is Calpain-D (1594 aa).

2 RanBP2-type zinc fingers span residues 1-35 and 135-164; these read MGTISSVLQWSCTKCNTINPTESLKCFNCGTVRKV and LNRRWVCHACGTDNSSVTWHCLICDTVSYL. Disordered regions lie at residues 210–256, 371–400, 420–459, 524–543, and 554–606; these read EEQH…TAID, EPQQKSPANPQQLQRKTQREPAAVSMNPTQ, ASSSSVSSSSNHHHHHHSNSNSNSSGNSNIINNNSSSSSG, KKKQQIASESQTNNNTGSGE, and AGLG…RLSG. Positions 215–229 are enriched in basic residues; the sequence is HQLHSQHLHKRHLKG. 2 stretches are compositionally biased toward polar residues: residues 246-255 and 371-385; these read RRTQSLSTAI and EPQQKSPANPQQLQR. Phosphoserine is present on Ser-250. Residues 438 to 459 show a composition bias toward low complexity; that stretch reads NSNSNSSGNSNIINNNSSSSSG. Over residues 528-541 the composition is skewed to polar residues; that stretch reads QIASESQTNNNTGS. Residues 643–673 form a RanBP2-type 3 zinc finger; it reads RSKMWICIKCSYAYNRLWLQTCEMCEAKAEQ. The tract at residues 684 to 703 is disordered; it reads QQQQQQHHHHHLQQQQAEAP. 2 consecutive RanBP2-type zinc fingers follow at residues 704 to 733 and 744 to 774; these read RDEPWTCKKCTLVNYSTAMACVVCGGSKLK and RKGEFWTCSHCTLKNSLHSPVCSACKSHRQP. Disordered regions lie at residues 786-811 and 860-884; these read RPDGQSYEEQDAAAVGGGGGSAHQSG and SLQQQRNSSSSGAIPKRHSTGGSIV. Residues 860–871 are compositionally biased toward polar residues; sequence SLQQQRNSSSSG. The segment at 927–956 adopts a RanBP2-type 6 zinc-finger fold; the sequence is STKKWQCPACTYDNCAASVVCDICSSPRGL. Residues 1014–1321 form the Calpain catalytic domain; sequence LFVDDSFPPA…FDCIDICKVR (308 aa). Residues Cys-1079, His-1245, and Asn-1265 contribute to the active site.

This sequence belongs to the peptidase C2 family.

In terms of biological role, has a role in eye development. Calcium-regulated non-lysosomal thiol-protease. The chain is Calpain-D (sol) from Drosophila melanogaster (Fruit fly).